We begin with the raw amino-acid sequence, 303 residues long: 2-dehydropantoate 2-reductase (303 aa).

NADP(+) contacts are provided by residues 7–12 (GCGALG), Asn98, and Ala122. Asn98 is a substrate binding site. The active-site Proton donor is Lys176. Substrate is bound by residues Asn180, Asn184, Asn194, and Ser244. Glu256 serves as a coordination point for NADP(+).

This sequence belongs to the ketopantoate reductase family. Monomer.

The protein localises to the cytoplasm. It carries out the reaction (R)-pantoate + NADP(+) = 2-dehydropantoate + NADPH + H(+). It functions in the pathway cofactor biosynthesis; (R)-pantothenate biosynthesis; (R)-pantoate from 3-methyl-2-oxobutanoate: step 2/2. Functionally, catalyzes the NADPH-dependent reduction of ketopantoate into pantoic acid. In Salmonella typhi, this protein is 2-dehydropantoate 2-reductase (panE).